The following is a 428-amino-acid chain: Chaperone SurA (428 aa).

The signal sequence occupies residues 1 to 13; it reads MLGALLLSGAVHA. PpiC domains follow at residues 164–265 and 276–375; these read SEEF…KLLE and RDEV…EVLG.

The protein resides in the periplasm. The enzyme catalyses [protein]-peptidylproline (omega=180) = [protein]-peptidylproline (omega=0). Functionally, chaperone involved in the correct folding and assembly of outer membrane proteins. Recognizes specific patterns of aromatic residues and the orientation of their side chains, which are found more frequently in integral outer membrane proteins. May act in both early periplasmic and late outer membrane-associated steps of protein maturation. The chain is Chaperone SurA from Pseudomonas syringae pv. tomato (strain ATCC BAA-871 / DC3000).